A 542-amino-acid polypeptide reads, in one-letter code: Peptide chain release factor 3 (542 aa).

The tr-type G domain maps to 14-283; it reads DKRRNFAIIS…AFLEYALKPG (270 aa). GTP contacts are provided by residues 23-30, 91-95, and 145-148; these read SHPDAGKT, DTPGH, and NKMD.

This sequence belongs to the TRAFAC class translation factor GTPase superfamily. Classic translation factor GTPase family. PrfC subfamily.

The protein localises to the cytoplasm. Its function is as follows. Increases the formation of ribosomal termination complexes and stimulates activities of RF-1 and RF-2. It binds guanine nucleotides and has strong preference for UGA stop codons. It may interact directly with the ribosome. The stimulation of RF-1 and RF-2 is significantly reduced by GTP and GDP, but not by GMP. In Trichodesmium erythraeum (strain IMS101), this protein is Peptide chain release factor 3.